Here is a 401-residue protein sequence, read N- to C-terminus: S-adenosylmethionine synthase (401 aa).

ATP is bound at residue 136–141 (GQGSVD).

The protein belongs to the AdoMet synthase 2 family. It depends on Mg(2+) as a cofactor.

It carries out the reaction L-methionine + ATP + H2O = S-adenosyl-L-methionine + phosphate + diphosphate. The protein operates within amino-acid biosynthesis; S-adenosyl-L-methionine biosynthesis; S-adenosyl-L-methionine from L-methionine: step 1/1. Catalyzes the formation of S-adenosylmethionine from methionine and ATP. This Pyrococcus abyssi (strain GE5 / Orsay) protein is S-adenosylmethionine synthase (mat).